The following is a 247-amino-acid chain: Probable membrane transporter protein y4hK (247 aa).

The next 6 membrane-spanning stretches (helical) occupy residues 5–25 (AIGL…VGQA), 31–51 (IAAM…ALAL), 74–94 (VYPF…VHLP), 121–141 (SALV…ITGA), 202–222 (FLPW…LIGS), and 227–247 (ASWL…KLLW).

This sequence belongs to the 4-toluene sulfonate uptake permease (TSUP) (TC 2.A.102) family.

It is found in the cell membrane. The chain is Probable membrane transporter protein y4hK from Sinorhizobium fredii (strain NBRC 101917 / NGR234).